We begin with the raw amino-acid sequence, 580 residues long: Benzoate--CoA ligase, peroxisomal (580 aa).

The Microbody targeting signal motif lies at 578–580; it reads SRL.

It belongs to the ATP-dependent AMP-binding enzyme family.

Its subcellular location is the peroxisome. It carries out the reaction benzoate + ATP + CoA = benzoyl-CoA + AMP + diphosphate. Functionally, benzoate--CoA ligase involved in benzoyloxyglucosinolate biosynthesis in seeds. Glucosinolates are secondary metabolites involved in pathogen and insect defense of cruciferous plants. The protein is Benzoate--CoA ligase, peroxisomal (AAE20) of Arabidopsis thaliana (Mouse-ear cress).